Reading from the N-terminus, the 419-residue chain is Serine hydroxymethyltransferase (419 aa).

(6S)-5,6,7,8-tetrahydrofolate is bound by residues Leu-121 and 125 to 127; that span reads GHL. Lys-230 is subject to N6-(pyridoxal phosphate)lysine. Residues Glu-246 and 355–357 contribute to the (6S)-5,6,7,8-tetrahydrofolate site; that span reads SPF.

The protein belongs to the SHMT family. As to quaternary structure, homodimer. It depends on pyridoxal 5'-phosphate as a cofactor.

It is found in the cytoplasm. It carries out the reaction (6R)-5,10-methylene-5,6,7,8-tetrahydrofolate + glycine + H2O = (6S)-5,6,7,8-tetrahydrofolate + L-serine. It functions in the pathway one-carbon metabolism; tetrahydrofolate interconversion. The protein operates within amino-acid biosynthesis; glycine biosynthesis; glycine from L-serine: step 1/1. Its function is as follows. Catalyzes the reversible interconversion of serine and glycine with tetrahydrofolate (THF) serving as the one-carbon carrier. This reaction serves as the major source of one-carbon groups required for the biosynthesis of purines, thymidylate, methionine, and other important biomolecules. Also exhibits THF-independent aldolase activity toward beta-hydroxyamino acids, producing glycine and aldehydes, via a retro-aldol mechanism. This is Serine hydroxymethyltransferase from Streptococcus suis (strain 98HAH33).